The following is a 303-amino-acid chain: Target of rapamycin complex subunit LST8 (303 aa).

7 WD repeats span residues Met-1 to Thr-27, His-30 to Val-68, Gly-73 to Asn-112, Lys-114 to Gln-153, Glu-157 to His-196, Ala-205 to Thr-244, and Gly-248 to Gln-287.

This sequence belongs to the WD repeat LST8 family. The target of rapamycin complex 1 (TORC1) is composed of at least KOG1, LST8, TCO89 and either TOR1 (TORC1-A) or TOR2 (TORC1-B). TORC1 binds to and is inhibited by FKBP-rapamycin. Interacts with PIB2; following activation of PIB2 by glutamine or cysteine and as part of the TORC1 complex. The target of rapamycin complex 2 (TORC2) is composed of at least AVO1, AVO2, BIT61, LST8, TOR2 and TSC11. TORC2 forms a homodimer. Contrary to TORC1, TORC2 does not bind to and is not sensitive to FKBP-rapamycin. LST8 binds to the C-terminal kinase domain in TOR2.

The protein localises to the cell membrane. The protein resides in the vacuole membrane. Its function is as follows. Essential component of both TORC1 and TORC2. TORC1 regulates multiple cellular processes to control cell growth in response to environmental signals. Nutrient limitation and environmental stress signals cause inactivation of TORC1. Active TORC1 positively controls ribosome biogenesis via control of rRNA, ribosomal protein and tRNA gene expression, and rRNA processing. TORC1 positively controls protein biosynthesis by regulation of mRNA stability, translation initiation factor activity, and high-affinity amino acid permeases that serve to provide amino acids for use by the translation machinery. TORC1 also promotes growth by sequestering a number of nutrient and general stress-responsive transcription factors in the cytoplasm. TORC1 negatively controls macroautophagy, a process to recycle surplus cytoplasmic mass under nutrient starvation conditions. LST8 is involved in the negative regulation of transcription factors GLN3 and RTG1-RTG3, limiting the synthesis of alpha-ketoglutarate, glutamate and glutamine. LST8 is required for targeting of amino acid permeases (AAPs) to the plasma membrane. TORC2 regulates cell cycle-dependent polarization of the actin-cytoskeleton, cell wall integrity, and receptor endocytosis. TORC2 controls polarity of the actin cytoskeleton, which is required for orienting the secretory pathway toward discrete growth sites, via the RHO1/PKC1/MAPK cell integrity pathway. LST8 is involved in maintenance of cell wall integrity. LST8 modulates TOR2 kinase activity. The chain is Target of rapamycin complex subunit LST8 from Saccharomyces cerevisiae (strain ATCC 204508 / S288c) (Baker's yeast).